Here is a 635-residue protein sequence, read N- to C-terminus: Threonine--tRNA ligase (635 aa).

Positions 1 to 61 (MVSIRLPDGS…DHDVALAIVT (61 aa)) constitute a TGS domain. Residues 242-533 (DHRKLGKQLD…LIEHHAGAMP (292 aa)) form a catalytic region. Zn(2+)-binding residues include Cys333, His384, and His510.

This sequence belongs to the class-II aminoacyl-tRNA synthetase family. In terms of assembly, homodimer. It depends on Zn(2+) as a cofactor.

The protein localises to the cytoplasm. The catalysed reaction is tRNA(Thr) + L-threonine + ATP = L-threonyl-tRNA(Thr) + AMP + diphosphate + H(+). Its function is as follows. Catalyzes the attachment of threonine to tRNA(Thr) in a two-step reaction: L-threonine is first activated by ATP to form Thr-AMP and then transferred to the acceptor end of tRNA(Thr). Also edits incorrectly charged L-seryl-tRNA(Thr). This chain is Threonine--tRNA ligase, found in Paraburkholderia phymatum (strain DSM 17167 / CIP 108236 / LMG 21445 / STM815) (Burkholderia phymatum).